Here is a 387-residue protein sequence, read N- to C-terminus: 8-amino-7-oxononanoate synthase (387 aa).

Arg-19 contributes to the substrate binding site. 106-107 (GY) is a pyridoxal 5'-phosphate binding site. His-131 is a substrate binding site. Ser-177, His-205, and Thr-236 together coordinate pyridoxal 5'-phosphate. An N6-(pyridoxal phosphate)lysine modification is found at Lys-239. Thr-353 contributes to the substrate binding site.

Belongs to the class-II pyridoxal-phosphate-dependent aminotransferase family. BioF subfamily. In terms of assembly, homodimer. Pyridoxal 5'-phosphate serves as cofactor.

It carries out the reaction 6-carboxyhexanoyl-[ACP] + L-alanine + H(+) = (8S)-8-amino-7-oxononanoate + holo-[ACP] + CO2. It participates in cofactor biosynthesis; biotin biosynthesis. Catalyzes the decarboxylative condensation of pimeloyl-[acyl-carrier protein] and L-alanine to produce 8-amino-7-oxononanoate (AON), [acyl-carrier protein], and carbon dioxide. In Nitrosomonas eutropha (strain DSM 101675 / C91 / Nm57), this protein is 8-amino-7-oxononanoate synthase.